The primary structure comprises 172 residues: Ubiquitin-conjugating enzyme E2 PEX4 (172 aa).

The UBC core domain occupies 14–167 (SASKRLIKEL…VELWCQDSDS (154 aa)). The active-site Glycyl thioester intermediate is Cys104.

This sequence belongs to the ubiquitin-conjugating enzyme family.

It catalyses the reaction S-ubiquitinyl-[E1 ubiquitin-activating enzyme]-L-cysteine + [E2 ubiquitin-conjugating enzyme]-L-cysteine = [E1 ubiquitin-activating enzyme]-L-cysteine + S-ubiquitinyl-[E2 ubiquitin-conjugating enzyme]-L-cysteine.. Its pathway is protein modification; protein ubiquitination. Functionally, ubiquitin-conjugating enzyme E2 that is essential for peroxisome biogenesis and plays a key role in development, pathogenicity, and cell wall integrity. Required for long and very long-chain fatty acid utilization and is involved in lipid droplet accumulation and the elimination of reactive oxygen species. Controls the expression of proteins involved in protein biosynthesis, fatty acid metabolism, cell wall synthesis, oxidation-reduction reactions, as well as of the enzymes involved in the biosynthesis of the mycotoxin deoxynivalenol (DON), including TRI5, TRI6, and TRI10. This Gibberella zeae (strain ATCC MYA-4620 / CBS 123657 / FGSC 9075 / NRRL 31084 / PH-1) (Wheat head blight fungus) protein is Ubiquitin-conjugating enzyme E2 PEX4.